Consider the following 967-residue polypeptide: Probable helicase DDB_G0274399 (967 aa).

A disordered region spans residues 161–192; that stretch reads EMTDDEDTAPTSAATHVGAPTKSTTTTTTTTT. 357–364 is a binding site for ATP; the sequence is GPPGTGKT. 2 disordered regions span residues 529-553 and 892-967; these read SAIP…QDTS and QKQK…RTRR. Residues 890–949 are a coiled coil; that stretch reads NLQKQKDIEKRKKQHKRQKQKSKENDKKKQLKKRKELNNNDNNNNNKESSNKEVQEITNA. Basic residues predominate over residues 900–909; that stretch reads RKKQHKRQKQ. The segment covering 928–937 has biased composition (low complexity); the sequence is NNDNNNNNKE.

It belongs to the DNA2/NAM7 helicase family.

It is found in the nucleus. The protein is Probable helicase DDB_G0274399 of Dictyostelium discoideum (Social amoeba).